A 192-amino-acid polypeptide reads, in one-letter code: dCTP deaminase, dUMP-forming (192 aa).

Residues 101–106, D119, 127–129, Q148, Y162, and Q174 contribute to the dCTP site; these read KSSLGR and TLE. The Proton donor/acceptor role is filled by E129. The interval 165 to 184 is disordered; sequence GAYGNRYQGQRGPTASRSHL. Over residues 171-183 the composition is skewed to polar residues; it reads YQGQRGPTASRSH.

It belongs to the dCTP deaminase family. In terms of assembly, homotrimer.

It carries out the reaction dCTP + 2 H2O = dUMP + NH4(+) + diphosphate. Its pathway is pyrimidine metabolism; dUMP biosynthesis; dUMP from dCTP: step 1/1. Its function is as follows. Bifunctional enzyme that catalyzes both the deamination of dCTP to dUTP and the hydrolysis of dUTP to dUMP without releasing the toxic dUTP intermediate. This Kocuria rhizophila (strain ATCC 9341 / DSM 348 / NBRC 103217 / DC2201) protein is dCTP deaminase, dUMP-forming.